The sequence spans 539 residues: Membrane protein insertase YidC (539 aa).

5 helical membrane passes run 6–26, 341–361, 416–436, 454–474, and 495–515; these read TLLV…WQVA, SVIQ…TFIV, LGGC…YWAL, LSAQ…MFLI, and PVMF…YWLV.

The protein belongs to the OXA1/ALB3/YidC family. Type 1 subfamily. In terms of assembly, interacts with the Sec translocase complex via SecD. Specifically interacts with transmembrane segments of nascent integral membrane proteins during membrane integration.

Its subcellular location is the cell inner membrane. Functionally, required for the insertion and/or proper folding and/or complex formation of integral membrane proteins into the membrane. Involved in integration of membrane proteins that insert both dependently and independently of the Sec translocase complex, as well as at least some lipoproteins. Aids folding of multispanning membrane proteins. The chain is Membrane protein insertase YidC from Vibrio vulnificus (strain CMCP6).